Consider the following 336-residue polypeptide: COP9 signalosome complex subunit 5 (336 aa).

Residues 44 to 181 (VRISSVAMIK…IGAFRTIPEG (138 aa)) form the MPN domain. The Zn(2+) site is built by His-127, His-129, and Asp-140. The short motif at 127–140 (HSHPGYGCWLSGID) is the JAMM motif element.

Belongs to the peptidase M67A family. CSN5 subfamily. Component of the COP9 signalosome (CSN) complex.

It is found in the cytoplasm. The protein resides in the nucleus. Functionally, catalytic component of the COP9 signalosome (CSN) complex that acts as an regulator of the ubiquitin (Ubl) conjugation pathway by mediating the deneddylation of the cullin subunit of SCF-type E3 ubiquitin-protein ligase complexes. The CSN complex is involved in the regulation of the circadian clock through its control of the stability of the SCF(FWD-1) complex. The sequence is that of COP9 signalosome complex subunit 5 (csn-5) from Neurospora crassa (strain ATCC 24698 / 74-OR23-1A / CBS 708.71 / DSM 1257 / FGSC 987).